Consider the following 129-residue polypeptide: Large ribosomal subunit protein bL17 (129 aa).

This sequence belongs to the bacterial ribosomal protein bL17 family. As to quaternary structure, part of the 50S ribosomal subunit. Contacts protein L32.

The protein is Large ribosomal subunit protein bL17 of Buchnera aphidicola subsp. Baizongia pistaciae (strain Bp).